Reading from the N-terminus, the 117-residue chain is UPF0251 protein DehaBAV1_0135 (117 aa).

The protein belongs to the UPF0251 family.

The protein is UPF0251 protein DehaBAV1_0135 of Dehalococcoides mccartyi (strain ATCC BAA-2100 / JCM 16839 / KCTC 5957 / BAV1).